Consider the following 56-residue polypeptide: Ovomucoid (56 aa).

The Kazal-like domain occupies 6–56; the sequence is VDCSEYPKPACMSEYRPLCGSDNKTYVNKCNFCNAVVESNGTLTLSHFGKC. Cystine bridges form between cysteine 8/cysteine 38, cysteine 16/cysteine 35, and cysteine 24/cysteine 56. Asparagine 45 is a glycosylation site (N-linked (GlcNAc...) asparagine).

The protein resides in the secreted. This is Ovomucoid from Colinus virginianus (Northern bobwhite).